Here is a 232-residue protein sequence, read N- to C-terminus: Y-linked testis-specific protein 1 (232 aa).

The protein belongs to the SPIN/STSY family. As to expression, expressed in testis (at protein level).

This is Y-linked testis-specific protein 1 (Ssty1) from Mus musculus (Mouse).